A 998-amino-acid polypeptide reads, in one-letter code: Type II restriction enzyme and methyltransferase RM.Eco57I (998 aa).

The protein in the C-terminal section; belongs to the N(4)/N(6)-methyltransferase family. Monomer.

The enzyme catalyses Endonucleolytic cleavage of DNA to give specific double-stranded fragments with terminal 5'-phosphates.. It catalyses the reaction a 2'-deoxyadenosine in DNA + S-adenosyl-L-methionine = an N(6)-methyl-2'-deoxyadenosine in DNA + S-adenosyl-L-homocysteine + H(+). With respect to regulation, mg(2+) is absolutely required for DNA restriction. In terms of biological role, an E, G and S subtype restriction enzyme that recognizes the (non-palindromic) double-stranded sequence 5'-CTGAAG-3' and cleaves respectively 22 bases after C-1 and 14 bases before C'-1; cleavage of lambda DNA is never complete. Also acts as a methylase that causes specific methylation on A-5 in 5'-CTGAAG-3', the other strand is methylated by the M.Eco57I methylase. The chain is Type II restriction enzyme and methyltransferase RM.Eco57I from Escherichia coli.